Reading from the N-terminus, the 187-residue chain is NADH-quinone oxidoreductase subunit C 2 (187 aa).

The disordered stretch occupies residues 153 to 187 (YKDKLNPFGAEGPPPTQPDLATRDIPQGRPSTPES).

The protein belongs to the complex I 30 kDa subunit family. NDH-1 is composed of 14 different subunits. Subunits NuoB, C, D, E, F, and G constitute the peripheral sector of the complex.

Its subcellular location is the cell inner membrane. It carries out the reaction a quinone + NADH + 5 H(+)(in) = a quinol + NAD(+) + 4 H(+)(out). Functionally, NDH-1 shuttles electrons from NADH, via FMN and iron-sulfur (Fe-S) centers, to quinones in the respiratory chain. The immediate electron acceptor for the enzyme in this species is believed to be ubiquinone. Couples the redox reaction to proton translocation (for every two electrons transferred, four hydrogen ions are translocated across the cytoplasmic membrane), and thus conserves the redox energy in a proton gradient. This chain is NADH-quinone oxidoreductase subunit C 2, found in Rhizobium etli (strain CIAT 652).